The chain runs to 83 residues: Small ribosomal subunit protein eS21 (83 aa).

It belongs to the eukaryotic ribosomal protein eS21 family. As to quaternary structure, component of the 40S small ribosomal subunit.

The protein resides in the cytoplasm. The protein localises to the cytosol. It is found in the rough endoplasmic reticulum. Functionally, component of the small ribosomal subunit. The ribosome is a large ribonucleoprotein complex responsible for the synthesis of proteins in the cell. In Xenopus laevis (African clawed frog), this protein is Small ribosomal subunit protein eS21 (rps21).